The following is a 328-amino-acid chain: HTH-type transcriptional regulator MalR (328 aa).

One can recognise an HTH lacI-type domain in the interval 2-57; the sequence is PVTIKDVAKAAGVSPSTVTRVIQNKSTISDETKKRVRKAMKELNYHPNLNARSLVS. A DNA-binding region (H-T-H motif) is located at residues 5 to 24; that stretch reads IKDVAKAAGVSPSTVTRVIQ. Residues 173–218 form an inducer binding region; that stretch reads TEYFIKKGCKRIAFIGGSKKLFVTKDRLTGYEQALKHYKLTTDNNR. A dimerization region spans residues 282-291; sequence NLAAYVDINS.

Its function is as follows. Transcriptional repressor of the maltosaccharide utilization operons malxCD and malMP. The chain is HTH-type transcriptional regulator MalR (malR) from Streptococcus pneumoniae serotype 4 (strain ATCC BAA-334 / TIGR4).